The following is a 279-amino-acid chain: Zinc finger CCCH domain-containing protein 42 (279 aa).

The interval 11-77 (SDHRSSSTPM…KAAVEPQEYP (67 aa)) is disordered. A compositionally biased stretch (low complexity) spans 16-39 (SSTPMATTTSSSASDPAAISPTPS). 3 consecutive C3H1-type zinc fingers follow at residues 79–107 (RPGV…HPAK), 120–148 (RPGE…HPPD), and 186–214 (RPGT…HPNS).

The protein is Zinc finger CCCH domain-containing protein 42 of Oryza sativa subsp. japonica (Rice).